We begin with the raw amino-acid sequence, 649 residues long: Flavin-dependent oxygenase ucdD (649 aa).

FAD is bound by residues Gln-92, Ile-185, Tyr-344, Asp-370, and Ser-386.

It belongs to the PheA/TfdB FAD monooxygenase family. In terms of assembly, homodimer. Requires FAD as cofactor.

It participates in secondary metabolite biosynthesis. Functionally, nonribosomal peptide synthetase that mediates the biosynthesis of usterphenyllins and uscandidusins, p-terphenyl derivatives. Within the pathway, ucdD catalyzes the formation of 3,15-dihydroxyterphenyllin via dihydroxylation at C-3 of ring A and C-15 of ring C of the terphenyllin intermediate. The pathway begin with the biosynthesis of 4-hydroxyphenylpyruvate (HPPA) from L-tyrosine, possibly by the aminotransferase ucdG. The nonribosomal peptide synthetase ucdA then condenses two HPPA units to produce atromentin. The key step in this pathway is the reduction and dehydration of atromentin to form a terphenyl triol intermediate, performed by the NAD-dependent dehydrogenase ucdB. Further O-methylation by the methyltransferase ucdC forms terphenyllin carrying two methoxy moieties at C-9 and C-12, and subsequent dihydroxylation at C-3 of ring A and C-15 of ring C by the flavin-dependent oxygenase ucdD leads to 3,15-dihydroxyterphenyllin. Prenylation by ucdE at position C-5 of ring A forms usterphenyllin B, and is followed by a second prenylation at position C-14 of ring C to form usterphenyllin A. The following furan ring formation that leads to uscandidusins A and B was proven to be an unexpected spontaneous non-enzymatic reaction. The chain is Flavin-dependent oxygenase ucdD from Aspergillus ustus.